The primary structure comprises 340 residues: Uroporphyrinogen decarboxylase (340 aa).

Residues 21–25 (RQAGR), F40, D71, Y146, S201, and H316 each bind substrate.

The protein belongs to the uroporphyrinogen decarboxylase family. In terms of assembly, homodimer.

It is found in the cytoplasm. The catalysed reaction is uroporphyrinogen III + 4 H(+) = coproporphyrinogen III + 4 CO2. Its pathway is porphyrin-containing compound metabolism; protoporphyrin-IX biosynthesis; coproporphyrinogen-III from 5-aminolevulinate: step 4/4. Its function is as follows. Catalyzes the decarboxylation of four acetate groups of uroporphyrinogen-III to yield coproporphyrinogen-III. This is Uroporphyrinogen decarboxylase from Rickettsia bellii (strain RML369-C).